A 1279-amino-acid polypeptide reads, in one-letter code: ATP-dependent helicase/nuclease subunit A (1279 aa).

The 496-residue stretch at 4 to 499 (TKWTDEQRQA…VKLFKNFRSR (496 aa)) folds into the UvrD-like helicase ATP-binding domain. Residue 25-32 (AGAGAGKT) coordinates ATP. The region spanning 526–853 (EEALKVGASY…RIMSIHKSKG (328 aa)) is the UvrD-like helicase C-terminal domain.

It belongs to the helicase family. AddA subfamily. As to quaternary structure, heterodimer of AddA and AddB/RexB. The cofactor is Mg(2+).

It carries out the reaction Couples ATP hydrolysis with the unwinding of duplex DNA by translocating in the 3'-5' direction.. The catalysed reaction is ATP + H2O = ADP + phosphate + H(+). Its function is as follows. The heterodimer acts as both an ATP-dependent DNA helicase and an ATP-dependent, dual-direction single-stranded exonuclease. Recognizes the chi site generating a DNA molecule suitable for the initiation of homologous recombination. The AddA nuclease domain is required for chi fragment generation; this subunit has the helicase and 3' -&gt; 5' nuclease activities. In Clostridium botulinum (strain Langeland / NCTC 10281 / Type F), this protein is ATP-dependent helicase/nuclease subunit A.